A 457-amino-acid chain; its full sequence is G-protein coupled receptor 135 (457 aa).

The tract at residues 1 to 26 (MEEQARPPGRPAASATLQGSAHPGGA) is disordered. Residues 1 to 64 (MEEQARPPGR…EAAGSRGPAP (64 aa)) lie on the Extracellular side of the membrane. Asparagine 47 carries an N-linked (GlcNAc...) asparagine glycan. Residues 65 to 85 (LLWHGAAVAAQALVLLLIFLL) traverse the membrane as a helical segment. Residues 86–109 (SSLGNCAVMGVIVKHRQLRTVTNA) are Cytoplasmic-facing. A helical membrane pass occupies residues 110-130 (FILSLSLSDLLTALLCLPAAF). Residues 131–156 (LDLFAPPGDSGPWRSFCAASRFFSSC) lie on the Extracellular side of the membrane. Residues 157 to 177 (FGIVSTFSVALISLDRYCAIV) traverse the membrane as a helical segment. Residues 178–189 (RPPRDKLGRRRA) are Cytoplasmic-facing. Residues 190–210 (LQLLAGAWLAALGFSLPWDLL) traverse the membrane as a helical segment. Residues 211–235 (RAPREPPAPQSFHRCLYRTSPDPAQ) lie on the Extracellular side of the membrane. Residues 236–256 (LGVAYSVGLVVACYLLPFLLM) form a helical membrane-spanning segment. Residues 257 to 295 (CFCRYHICKTVRLSDVRVRPMTTYARVLRFFSEVRTATT) are Cytoplasmic-facing. Residues 296–316 (VLIMIIFVMCCWGPYCFLVLL) form a helical membrane-spanning segment. Residues 317-329 (AATRQGQATQAPS) are Extracellular-facing. Residues 330 to 350 (LLNVAAVWLTWANGAINPVIY) form a helical membrane-spanning segment. Over 351–457 (AIRNPNISML…HNSETRDSSI (107 aa)) the chain is Cytoplasmic.

Belongs to the G-protein coupled receptor 1 family. In terms of assembly, interacts with MTNR1B. Interacts with ARRB1 and ARRB2 in a spontaneous and agonist-independent manner; leading to the internalization of GPR135 in the endosomal compartment.

It is found in the cell membrane. The protein localises to the endosome membrane. Its function is as follows. Orphan receptor. Has spontaneous activity for beta-arrestin recruitment. Shows a reciprocal regulatory interaction with the melatonin receptor MTNR1B most likely through receptor heteromerization. The chain is G-protein coupled receptor 135 (Gpr135) from Mus musculus (Mouse).